A 499-amino-acid chain; its full sequence is MAEPSAGRQKVVIVGAGPVGSLAALYAAARGDDVEMYELRGDLRDPNTIPLNFTKSINLALSERGITAMRQANREELIDRVLADAIPMHGRMIHGRSDGKLWEAAQTYDVHGRAINAVDRGTLNNALLDELSRTPNVKMFFNHKLTGADFRTNRAWLERRTPGTASTPESVTEIEITFDYLIGADGAHSASRYHMMKFARVDYQQEYIDALWCEFRIPPSPETGDFQISPNHLHIWPGKEFMFIALPSADKSFTCTLFAPAWHYEKLEKSSPQDLVTSFDYNFPGVCPNLITPEALAEQFTENPHLPLISLKCKPHHFGSSVVIVGDAAHAVLPFYGQGLNAGLEDIPVLFSFMDQYGVYDDSISPTPEARASARAAALQAYTNQRTADTWAINDLSKQNYLEMRWGVKSPVYKLRKMVEETLDHYVPSLGWQTQYSRVSFSNQRYSEVIASVKRQGKLLGVAGLSSVLVSVMIGAGVLMRWPERLSLGAVWRTVFGRN.

Belongs to the aromatic-ring hydroxylase family. KMO subfamily. FAD is required as a cofactor.

It localises to the mitochondrion outer membrane. The enzyme catalyses L-kynurenine + NADPH + O2 + H(+) = 3-hydroxy-L-kynurenine + NADP(+) + H2O. It participates in cofactor biosynthesis; NAD(+) biosynthesis; quinolinate from L-kynurenine: step 1/3. Its function is as follows. Catalyzes the hydroxylation of L-kynurenine (L-Kyn) to form 3-hydroxy-L-kynurenine (L-3OHKyn). Required for synthesis of quinolinic acid. The chain is Kynurenine 3-monooxygenase 3 (bna4-3) from Aspergillus niger (strain ATCC MYA-4892 / CBS 513.88 / FGSC A1513).